The following is a 269-amino-acid chain: Formamidopyrimidine-DNA glycosylase (269 aa).

P2 functions as the Schiff-base intermediate with DNA in the catalytic mechanism. Catalysis depends on E3, which acts as the Proton donor. K57 (proton donor; for beta-elimination activity) is an active-site residue. Residues H90, R109, and K150 each coordinate DNA. An FPG-type zinc finger spans residues 235 to 269 (QVYGRKGEPCRVCGTPIVATKHAQRATFYCRQCQK). R259 serves as the catalytic Proton donor; for delta-elimination activity.

Belongs to the FPG family. Monomer. It depends on Zn(2+) as a cofactor.

It carries out the reaction Hydrolysis of DNA containing ring-opened 7-methylguanine residues, releasing 2,6-diamino-4-hydroxy-5-(N-methyl)formamidopyrimidine.. The enzyme catalyses 2'-deoxyribonucleotide-(2'-deoxyribose 5'-phosphate)-2'-deoxyribonucleotide-DNA = a 3'-end 2'-deoxyribonucleotide-(2,3-dehydro-2,3-deoxyribose 5'-phosphate)-DNA + a 5'-end 5'-phospho-2'-deoxyribonucleoside-DNA + H(+). In terms of biological role, involved in base excision repair of DNA damaged by oxidation or by mutagenic agents. Acts as a DNA glycosylase that recognizes and removes damaged bases. Has a preference for oxidized purines, such as 7,8-dihydro-8-oxoguanine (8-oxoG). Has AP (apurinic/apyrimidinic) lyase activity and introduces nicks in the DNA strand. Cleaves the DNA backbone by beta-delta elimination to generate a single-strand break at the site of the removed base with both 3'- and 5'-phosphates. The sequence is that of Formamidopyrimidine-DNA glycosylase from Escherichia coli (strain K12 / MC4100 / BW2952).